Reading from the N-terminus, the 235-residue chain is Large ribosomal subunit protein uL1 (235 aa).

Belongs to the universal ribosomal protein uL1 family. Part of the 50S ribosomal subunit.

Functionally, binds directly to 23S rRNA. The L1 stalk is quite mobile in the ribosome, and is involved in E site tRNA release. Protein L1 is also a translational repressor protein, it controls the translation of the L11 operon by binding to its mRNA. In Desulfotalea psychrophila (strain LSv54 / DSM 12343), this protein is Large ribosomal subunit protein uL1.